Consider the following 559-residue polypeptide: Glucose-6-phosphate isomerase (559 aa).

E363 serves as the catalytic Proton donor. Catalysis depends on residues H394 and K523.

The protein belongs to the GPI family.

It localises to the cytoplasm. It carries out the reaction alpha-D-glucose 6-phosphate = beta-D-fructose 6-phosphate. It functions in the pathway carbohydrate biosynthesis; gluconeogenesis. The protein operates within carbohydrate degradation; glycolysis; D-glyceraldehyde 3-phosphate and glycerone phosphate from D-glucose: step 2/4. Its function is as follows. Catalyzes the reversible isomerization of glucose-6-phosphate to fructose-6-phosphate. The polypeptide is Glucose-6-phosphate isomerase (Bartonella quintana (strain Toulouse) (Rochalimaea quintana)).